The chain runs to 545 residues: Gamma-curcumene synthase (545 aa).

Asp299, Asp303, Asn442, and Glu450 together coordinate Mg(2+). The DDXXD motif signature appears at 299–303 (DDTYD).

This sequence belongs to the terpene synthase family. Mg(2+) is required as a cofactor.

The protein localises to the cytoplasm. Its subcellular location is the cytosol. The enzyme catalyses (2E,6E)-farnesyl diphosphate = gamma-curcumene + diphosphate. The protein operates within secondary metabolite biosynthesis; terpenoid biosynthesis. Its function is as follows. Sesquiterpene synthase involved in gamma-curcumene biosynthesis. This Pogostemon cablin (Patchouli) protein is Gamma-curcumene synthase.